The chain runs to 409 residues: Ingression protein 1 (409 aa).

The region spanning 1 to 114 is the C2 domain; it reads MSEEVWNGNQ…DPKEGYCTWY (114 aa). A disordered region spans residues 300-409; that stretch reads LSYDEDDDDD…TRKRPPPRLS (110 aa). Over residues 302–313 the composition is skewed to acidic residues; that stretch reads YDEDDDDDDEND. The segment covering 315-328 has biased composition (polar residues); sequence FYSSSHRVSHNYNQ. The span at 360-377 shows a compositional bias: low complexity; the sequence is LDSSSPNSHPHPSGLNSP. The segment covering 384–399 has biased composition (polar residues); that stretch reads TTSNSNFNSRKNSMSP. Serine 392 carries the post-translational modification Phosphoserine. Over residues 400-409 the composition is skewed to basic residues; the sequence is TRKRPPPRLS.

Belongs to the INN1/fic1 family. Interacts with CYK2, CYK3 and IQG1.

The protein localises to the bud neck. Its function is as follows. Required for the ingression of the plasma membrane into the bud neck at the end of cytokinesis, leading to the separation of the mother and daughter cells. Stimulates the synthesis of the primary septum (PS) by CHS2. The chain is Ingression protein 1 (INN1) from Saccharomyces cerevisiae (strain ATCC 204508 / S288c) (Baker's yeast).